Here is a 570-residue protein sequence, read N- to C-terminus: Small ribosomal subunit protein uS2c (570 aa).

The segment at 1-306 is N-terminal extension; it reads MLNKKPPYLI…IKLNPLSTPQ (306 aa). TRAM domains are found at residues 28-89 and 104-169; these read KLIP…KLIK and ALTP…VATV.

It belongs to the universal ribosomal protein uS2 family.

Its subcellular location is the plastid. The protein localises to the chloroplast. The chain is Small ribosomal subunit protein uS2c (rps2-1) from Chlamydomonas reinhardtii (Chlamydomonas smithii).